A 252-amino-acid polypeptide reads, in one-letter code: MPIQPLKKELVSFLEPYMPENAGVLGEQEKPYVILTYAQSLDARIAKIKGTRTIISHQETNTMTHYLRYKFDGIMLGCGTVLVDDPGLNCKWWPDDEPKPEHFAEHSPRPIILDPNGKWKFEGSKMKTLFDSGDGKAPIVVVKKLPEVVEENVDYLVMQTNFTGKVDWHDLFIQLKSQFGLKSIMVEGGGIVINDLLQRPHLIDALVITVGATFLGSEGVEVSPLIEINLKDISWWKGTRDSVLCSRLVSHS.

Residues T80, D84, V166, and G189–I193 contribute to the NADP(+) site.

Belongs to the HTP reductase family. As to quaternary structure, homodimer.

It carries out the reaction 2,5-diamino-6-(1-D-ribitylamino)pyrimidin-4(3H)-one 5'-phosphate + NADP(+) = 2,5-diamino-6-(1-D-ribosylamino)pyrimidin-4(3H)-one 5'-phosphate + NADPH + H(+). It catalyses the reaction 2,5-diamino-6-(1-D-ribitylamino)pyrimidin-4(3H)-one 5'-phosphate + NAD(+) = 2,5-diamino-6-(1-D-ribosylamino)pyrimidin-4(3H)-one 5'-phosphate + NADH + H(+). It participates in cofactor biosynthesis; riboflavin biosynthesis. Catalyzes an early step in riboflavin biosynthesis, the NADPH-dependent reduction of the ribose side chain of 2,5-diamino-6-ribosylamino-4(3H)-pyrimidinone 5'-phosphate, yielding 2,5-diamino-6-ribitylamino-4(3H)-pyrimidinone 5'-phosphate. This chain is 2,5-diamino-6-ribosylamino-4(3H)-pyrimidinone 5'-phosphate reductase (RIB7), found in Kluyveromyces lactis (strain ATCC 8585 / CBS 2359 / DSM 70799 / NBRC 1267 / NRRL Y-1140 / WM37) (Yeast).